A 1579-amino-acid chain; its full sequence is tRNA (guanosine(18)-2'-O)-methyltransferase TARBP1 (1579 aa).

Met-1 carries the post-translational modification N-acetylmethionine. S-adenosyl-L-homocysteine contacts are provided by Val-1501, Gly-1524, Ile-1544, Gln-1546, and Leu-1553.

Belongs to the class IV-like SAM-binding methyltransferase superfamily. RNA methyltransferase TrmH family. As to quaternary structure, monomer and homodimer.

It carries out the reaction guanosine(18) in tRNA + S-adenosyl-L-methionine = 2'-O-methylguanosine(18) in tRNA + S-adenosyl-L-homocysteine + H(+). Its function is as follows. S-adenosyl-L-methionine-dependent 2'-O-ribose methyltransferase that catalyzes the formation of 2'-O-methylguanosine at position 18 (Gm18) in a subset of tRNA. Selectively mediates Gm18 methylation of tRNAGln-TTG/CTG and tRNASer-TGA/GCT. Gm18 modification can enhance the stability of modified tRNAs. The chain is tRNA (guanosine(18)-2'-O)-methyltransferase TARBP1 from Mus musculus (Mouse).